Here is a 311-residue protein sequence, read N- to C-terminus: Protease HtpX homolog 1 (311 aa).

The next 2 membrane-spanning stretches (helical) occupy residues 12-32 (VISLGLTIISEGIVLIGIASL) and 35-55 (ISLFFIFPALVIFWLFQWIIS). Histidine 137 is a binding site for Zn(2+). Glutamate 138 is an active-site residue. Position 141 (histidine 141) interacts with Zn(2+). 2 helical membrane passes run 159–179 (VLGYISTLLMNFGYLALFLAA) and 184–204 (LLFAIAALAIGFVIFVVTFIL). Glutamate 216 serves as a coordination point for Zn(2+).

The protein belongs to the peptidase M48B family. The cofactor is Zn(2+).

It localises to the cell membrane. This Saccharolobus solfataricus (strain ATCC 35092 / DSM 1617 / JCM 11322 / P2) (Sulfolobus solfataricus) protein is Protease HtpX homolog 1.